We begin with the raw amino-acid sequence, 297 residues long: tRNA pseudouridine synthase B (297 aa).

The active-site Nucleophile is the Asp44.

Belongs to the pseudouridine synthase TruB family. Type 1 subfamily.

The catalysed reaction is uridine(55) in tRNA = pseudouridine(55) in tRNA. In terms of biological role, responsible for synthesis of pseudouridine from uracil-55 in the psi GC loop of transfer RNAs. The chain is tRNA pseudouridine synthase B from Corynebacterium glutamicum (strain ATCC 13032 / DSM 20300 / JCM 1318 / BCRC 11384 / CCUG 27702 / LMG 3730 / NBRC 12168 / NCIMB 10025 / NRRL B-2784 / 534).